The following is a 256-amino-acid chain: 5'-nucleotidase YutF (256 aa).

Belongs to the HAD-like hydrolase superfamily. NagD family. As to quaternary structure, homodimer. Mg(2+) serves as cofactor.

The protein resides in the cytoplasm. The catalysed reaction is a ribonucleoside 5'-phosphate + H2O = a ribonucleoside + phosphate. The enzyme catalyses XMP + H2O = xanthosine + phosphate. Functionally, catalyzes the hydrolysis of various purine and pyrimidine 5'-nucleotides, showing preference for 5'-nucleoside monophosphates and exhibiting the highest catalytic activity toward 5'-XMP. Also shows a relatively high phosphohydrolase activity toward the nucleotide precursors ribose-5-phosphate (R5P) and 5-phosphoribosyl-1-pyrophosphate (PRPP), and toward the non-natural substrate p-nitrophenyl phosphate (pNPP). The polypeptide is 5'-nucleotidase YutF (yutF) (Bacillus subtilis (strain 168)).